A 754-amino-acid chain; its full sequence is 5-methyltetrahydropteroyltriglutamate--homocysteine methyltransferase (754 aa).

Residues 17–20 (RELK) and Lys117 each bind 5-methyltetrahydropteroyltri-L-glutamate. L-homocysteine is bound by residues 431–433 (IGS) and Glu484. Residues 431-433 (IGS) and Glu484 each bind L-methionine. 5-methyltetrahydropteroyltri-L-glutamate-binding positions include 515 to 516 (RC) and Trp561. Residue Asp599 participates in L-homocysteine binding. Residue Asp599 participates in L-methionine binding. Residue Glu605 participates in 5-methyltetrahydropteroyltri-L-glutamate binding. Positions 641, 643, and 665 each coordinate Zn(2+). The active-site Proton donor is the His694. Cys726 provides a ligand contact to Zn(2+).

Belongs to the vitamin-B12 independent methionine synthase family. It depends on Zn(2+) as a cofactor.

It catalyses the reaction 5-methyltetrahydropteroyltri-L-glutamate + L-homocysteine = tetrahydropteroyltri-L-glutamate + L-methionine. The protein operates within amino-acid biosynthesis; L-methionine biosynthesis via de novo pathway; L-methionine from L-homocysteine (MetE route): step 1/1. Catalyzes the transfer of a methyl group from 5-methyltetrahydrofolate to homocysteine resulting in methionine formation. The chain is 5-methyltetrahydropteroyltriglutamate--homocysteine methyltransferase from Salmonella typhi.